The chain runs to 207 residues: MAEYTLPDLDYDYGALEPHISGQINELHHSKHHAAYVKGVNDAVAKLDEARANGDHAAIFLNEKNLAFHLGGHVNHSIWWKNLSPNGGDKPTGDLAAAIDDQFGSFDKFQAQFTAAANGLQGSGWAVLGYDSLGDRLLTFQLYDQQANVPLGIIPLLQVDMWEHAFYLQYKNVKADYVKAFWNVVNWEDVQNRYAAATSKTNGLIFG.

His-28, His-76, Asp-160, and His-164 together coordinate Mn(2+).

This sequence belongs to the iron/manganese superoxide dismutase family. Mn(2+) serves as cofactor.

It carries out the reaction 2 superoxide + 2 H(+) = H2O2 + O2. In terms of biological role, destroys superoxide anion radicals which are normally produced within the cells and which are toxic to biological systems. This is Superoxide dismutase [Mn] (sodA) from Mycolicibacterium fortuitum (Mycobacterium fortuitum).